The primary structure comprises 178 residues: MQSTKEHRAFLIGRFQPFHLGHLEIVKRILRENDSIIIGIGSAQYSHTTVNPFTAGERHLMISRTLEREHVYNYYLVPIEDVNANSLWVSHVEALAPKFDVVYTNNPLVRRLFTEKHYEVRSLPMVNRSEWTGTKIREKMIKGENWEQNVPEPVVEVIREIDGISRIRQLSTTDEDVP.

Belongs to the archaeal NMN adenylyltransferase family.

The protein localises to the cytoplasm. It catalyses the reaction beta-nicotinamide D-ribonucleotide + ATP + H(+) = diphosphate + NAD(+). It functions in the pathway cofactor biosynthesis; NAD(+) biosynthesis; NAD(+) from nicotinamide D-ribonucleotide: step 1/1. The protein is Nicotinamide-nucleotide adenylyltransferase of Thermoplasma volcanium (strain ATCC 51530 / DSM 4299 / JCM 9571 / NBRC 15438 / GSS1).